Here is a 272-residue protein sequence, read N- to C-terminus: D-aminoacyl-tRNA deacylase (272 aa).

It belongs to the DtdA deacylase family. As to quaternary structure, monomer. Zn(2+) is required as a cofactor.

The catalysed reaction is a D-aminoacyl-tRNA + H2O = a tRNA + a D-alpha-amino acid + H(+). It carries out the reaction glycyl-tRNA(Ala) + H2O = tRNA(Ala) + glycine + H(+). Its function is as follows. D-aminoacyl-tRNA deacylase with broad substrate specificity. By recycling D-aminoacyl-tRNA to D-amino acids and free tRNA molecules, this enzyme counteracts the toxicity associated with the formation of D-aminoacyl-tRNA entities in vivo. In Desulfurococcus amylolyticus (strain DSM 18924 / JCM 16383 / VKM B-2413 / 1221n) (Desulfurococcus kamchatkensis), this protein is D-aminoacyl-tRNA deacylase.